Here is a 334-residue protein sequence, read N- to C-terminus: Ketol-acid reductoisomerase (NADP(+)) (334 aa).

The KARI N-terminal Rossmann domain occupies 1 to 181 (MTTVYYDQDV…GATRAGVIET (181 aa)). NADP(+)-binding positions include 25–28 (YGSQ), R48, S52, and 82–85 (DEIQ). H107 is an active-site residue. G133 contributes to the NADP(+) binding site. In terms of domain architecture, KARI C-terminal knotted spans 182-327 (TFKEETETDL…RELREMMPFI (146 aa)). The Mg(2+) site is built by D190, E194, E226, and E230. S251 provides a ligand contact to substrate.

Belongs to the ketol-acid reductoisomerase family. It depends on Mg(2+) as a cofactor.

It carries out the reaction (2R)-2,3-dihydroxy-3-methylbutanoate + NADP(+) = (2S)-2-acetolactate + NADPH + H(+). The catalysed reaction is (2R,3R)-2,3-dihydroxy-3-methylpentanoate + NADP(+) = (S)-2-ethyl-2-hydroxy-3-oxobutanoate + NADPH + H(+). It functions in the pathway amino-acid biosynthesis; L-isoleucine biosynthesis; L-isoleucine from 2-oxobutanoate: step 2/4. It participates in amino-acid biosynthesis; L-valine biosynthesis; L-valine from pyruvate: step 2/4. Involved in the biosynthesis of branched-chain amino acids (BCAA). Catalyzes an alkyl-migration followed by a ketol-acid reduction of (S)-2-acetolactate (S2AL) to yield (R)-2,3-dihydroxy-isovalerate. In the isomerase reaction, S2AL is rearranged via a Mg-dependent methyl migration to produce 3-hydroxy-3-methyl-2-ketobutyrate (HMKB). In the reductase reaction, this 2-ketoacid undergoes a metal-dependent reduction by NADPH to yield (R)-2,3-dihydroxy-isovalerate. The protein is Ketol-acid reductoisomerase (NADP(+)) of Staphylococcus aureus (strain MSSA476).